We begin with the raw amino-acid sequence, 1665 residues long: Cortactin-binding protein 2 (1665 aa).

A coiled-coil region spans residues 120 to 277; that stretch reads RKMQERMSTQ…EQLKRGNDSK (158 aa). Disordered regions lie at residues 203–222, 368–480, and 500–620; these read EKKK…RRST, VSSV…SPTS, and RFTS…PSID. Composition is skewed to polar residues over residues 388–399 and 410–429; these read SIGSTPDLASST and TGQT…SMHS. A compositionally biased stretch (low complexity) spans 455–469; it reads QGNANDQDQNGNTTQ. A compositionally biased stretch (polar residues) spans 470–480; that stretch reads SPPSRDVSPTS. Arg500 carries the post-translational modification Asymmetric dimethylarginine. 5 ANK repeats span residues 711–741, 745–774, 778–807, 811–840, and 844–873; these read GRPT…DINY, DGHS…QIDA, NGFT…NIDH, GGQT…DRSV, and DGWT…PTLG. Residues 875 to 902 are disordered; sequence SLNEEEPEPGAFDLDQGQEGSEGTAKPV. An ANK 6 repeat occupies 914–944; it reads EGWTAAHIAASKGFKNCLEILCRHGGLEPER. The interval 1447-1495 is disordered; that stretch reads CSKKKGENGAWRKVSTNPRKKSGRFSSPTWSKPDLGEEGTKNKTMSQPN. A Phosphoserine modification is found at Ser1526. Residues 1575–1665 form a disordered region; that stretch reads NNLRMPVSQK…KNEQVQKPNK (91 aa). Low complexity-rich tracts occupy residues 1590 to 1604 and 1623 to 1641; these read SSHQ…TSKT and SQCS…TRQT. Over residues 1656–1665 the composition is skewed to polar residues; sequence KNEQVQKPNK.

In terms of assembly, interacts with CTTN/cortactin SH3 domain. Interacts with STRN, STRN4/zinedin and MOB4/phocein; this interactions mediate the association with the STRIPAK core complex and may regulate dendritic spine distribution of the STRIPAK complex in hippocampal neurons. Activation of glutamate receptors weakens the interaction with STRN and STRN4.

It localises to the cytoplasm. The protein resides in the cell cortex. The protein localises to the cell projection. Its subcellular location is the dendritic spine. Regulates the dendritic spine distribution of CTTN/cortactin in hippocampal neurons, and thus controls dendritic spinogenesis and dendritic spine maintenance. Associates with the striatin-interacting phosphatase and kinase (STRIPAK) core complex to regulate dendritic spine distribution of the STRIPAK complex in hippocampal neurons. The sequence is that of Cortactin-binding protein 2 (CTTNBP2) from Dasypus novemcinctus (Nine-banded armadillo).